The chain runs to 402 residues: Protein rds1 (402 aa).

Its function is as follows. May have a function in stress-related responses of the cell. This is Protein rds1 (rds1) from Schizosaccharomyces pombe (strain 972 / ATCC 24843) (Fission yeast).